Consider the following 256-residue polypeptide: Pimeloyl-[acyl-carrier protein] methyl ester esterase (256 aa).

The region spanning 15-242 (HLVLLHGWGL…AAHAPFISHP (228 aa)) is the AB hydrolase-1 domain. Substrate-binding positions include Trp-22, 82 to 83 (SL), and 143 to 147 (FLALQ). Catalysis depends on Ser-82, which acts as the Nucleophile. Residues Asp-207 and His-235 contribute to the active site. His-235 contacts substrate.

This sequence belongs to the AB hydrolase superfamily. Carboxylesterase BioH family. Monomer.

It is found in the cytoplasm. It catalyses the reaction 6-carboxyhexanoyl-[ACP] methyl ester + H2O = 6-carboxyhexanoyl-[ACP] + methanol + H(+). It functions in the pathway cofactor biosynthesis; biotin biosynthesis. Its function is as follows. The physiological role of BioH is to remove the methyl group introduced by BioC when the pimeloyl moiety is complete. It allows to synthesize pimeloyl-ACP via the fatty acid synthetic pathway through the hydrolysis of the ester bonds of pimeloyl-ACP esters. The chain is Pimeloyl-[acyl-carrier protein] methyl ester esterase from Shigella boydii serotype 4 (strain Sb227).